A 990-amino-acid chain; its full sequence is Bifunctional glutamine synthetase adenylyltransferase/adenylyl-removing enzyme (990 aa).

Positions 1–474 are adenylyl removase; that stretch reads MIFSAITADL…HYAKLFEGDP (474 aa). The interval 478–990 is adenylyl transferase; it reads AKLPPVDYGA…FNRLIGGEDA (513 aa).

This sequence belongs to the GlnE family. Mg(2+) serves as cofactor.

The enzyme catalyses [glutamine synthetase]-O(4)-(5'-adenylyl)-L-tyrosine + phosphate = [glutamine synthetase]-L-tyrosine + ADP. It carries out the reaction [glutamine synthetase]-L-tyrosine + ATP = [glutamine synthetase]-O(4)-(5'-adenylyl)-L-tyrosine + diphosphate. In terms of biological role, involved in the regulation of glutamine synthetase GlnA, a key enzyme in the process to assimilate ammonia. When cellular nitrogen levels are high, the C-terminal adenylyl transferase (AT) inactivates GlnA by covalent transfer of an adenylyl group from ATP to specific tyrosine residue of GlnA, thus reducing its activity. Conversely, when nitrogen levels are low, the N-terminal adenylyl removase (AR) activates GlnA by removing the adenylyl group by phosphorolysis, increasing its activity. The regulatory region of GlnE binds the signal transduction protein PII (GlnB) which indicates the nitrogen status of the cell. This is Bifunctional glutamine synthetase adenylyltransferase/adenylyl-removing enzyme from Rhodopseudomonas palustris (strain TIE-1).